The primary structure comprises 356 residues: GTPase Obg (356 aa).

The Obg domain occupies 1–159; sequence MKFLDEAKVY…RWIWLRMKLI (159 aa). The 168-residue stretch at 160–327 folds into the OBG-type G domain; that stretch reads ADAGLVGLPN…VLRALTDVIS (168 aa). Residues 166–173, 191–195, 212–215, 279–282, and 308–310 contribute to the GTP site; these read GLPNAGKS, FTTLH, DIPG, NKID, and SGV. The Mg(2+) site is built by Ser-173 and Thr-193. The interval 329 to 356 is disordered; the sequence is APVSTKAKGEPTENETPPPSTGWSPLSN.

The protein belongs to the TRAFAC class OBG-HflX-like GTPase superfamily. OBG GTPase family. In terms of assembly, monomer. Requires Mg(2+) as cofactor.

The protein resides in the cytoplasm. In terms of biological role, an essential GTPase which binds GTP, GDP and possibly (p)ppGpp with moderate affinity, with high nucleotide exchange rates and a fairly low GTP hydrolysis rate. Plays a role in control of the cell cycle, stress response, ribosome biogenesis and in those bacteria that undergo differentiation, in morphogenesis control. This is GTPase Obg from Afipia carboxidovorans (strain ATCC 49405 / DSM 1227 / KCTC 32145 / OM5) (Oligotropha carboxidovorans).